The primary structure comprises 1353 residues: MERLCSDGFAFPHYYIKPYHLKRIHRAVLRGNLEKLKYLLLTYYDANKRDRKERTALHLACATGQPEMVHLLVSRRCELNLCDREDRTPLIKAVQLRQEACATLLLQNGADPNITDVFGRTALHYAVYNEDTSMIEKLLSHGTNIEECSKNEYQPLLLAVSRRKVKMVEFLLKKKANVNAIDYLGRSALILAVTLGEKDIVILLLQHNIDVFSRDVYGKLAEDYASEAENRVIFDLIYEYKRKRYEDLPINSNPVSPQKQRAEKATSDDKDSVSNIATEIKEGPISGTVSSQKQPAEKATSDEKDSVSNIATEIKEGQQSGTVSPQKQSAQKVIFKKKVSLLNIATRIMGGGKSGTVSSQKQPASKTASDKTDSALNTATEIKDGLQCGTVSSQKQQALKATTDEEGSVSNIATEIKDGEKSGTVSSQKKPALKATSDEKDSFSNITREKKDGEISRTVSSQKPPALKATSVKEDSVLNIAREKKDGEKSRTVSFEQPPGLKATRDEKDSLLNIARGKKDGEKTRRVSSHKQPSLKATSDKEDSVPNMATETKDEQISGTVSCQKQPALKATSDKKDSVSNIPTEIKDGQQSGTVSSQKQPAWKATSVKKDSVSNIATEIKDGQIRGTVSSQRRPALKTTGDEKDSVSNIAREIKDGEKSGTVSPQKQSAQKVIFKKKVSLLNIATRITGGGKSGTEYPENLRTLKATIENKDSVLNTATKMKEVQTSTPAEQDLEMASEGEQKRLEEYENNQPQVKNQIHSRDDLDDIIQSSQTVSEDGDSLCCNCKNVILLIDQHEMKCKDCVHLLKIKNTFCLWKRLIKLKDNHCEQLRVKIRKLKNKASVLQKRISEKEEIKSQLKHEILELEKELCSLRFAIQQEKKKRRNVEELHQKVREKLRITEEQYRIEADVTKPIKPALKSAEVELKTGGNNSNQVSETDEKEDLLHENRLMQDEIARLRLEKDTIKNQNLEKKYLKDFEIVKRKHEDLQKALKRNGETLAKTIACYSGQLAALTDENTTLRSKLEKQRESRQRLETEMQSYRCRLNAARCDHDQSHSSKRDQELAFQGTVDKCRHLQENLNSHVLILSLQLSKAESKSRVLKTELHYTGEALKEKALVFEHVQSELKQKQSQMKDIEKMYKSGYNTMEKCIEKQERFCQLKKQNMLLQQQLDDARNKADNQEKAILNIQARCDARVQNLQAECRKHRLLLEEDNKMLVNELNHSKEKECQYEKEKAEREVAVRQLQQKRDDVLNKGSATKALLDASSRHCTYLENGMQDSRKKLDQMRSQFQEIQDQLTATIRCTKEMEGDTQKLEVEHVMMRKIIKKQDDQIERLEKILQHSSLMLQVFES.

6 ANK repeats span residues 19–48 (YHLK…DANK), 52–81 (KERT…ELNL), 85–114 (EDRT…DPNI), 118–147 (FGRT…NIEE), 151–180 (NEYQ…NVNA), and 184–213 (LGRS…DVFS). Disordered regions lie at residues 249 to 307 (PINS…KDSV) and 349 to 607 (MGGG…KATS). Positions 250 to 259 (INSNPVSPQK) are enriched in polar residues. Composition is skewed to basic and acidic residues over residues 260–272 (QRAE…DKDS) and 295–306 (PAEKATSDEKDS). Polar residues-rich tracts occupy residues 355–367 (GTVS…ASKT) and 389–400 (GTVSSQKQQALK). Composition is skewed to basic and acidic residues over residues 436–455 (TSDE…DGEI) and 471–491 (SVKE…EKSR). The span at 579-600 (VSNIPTEIKDGQQSGTVSSQKQ) shows a compositional bias: polar residues. Coiled coils occupy residues 731–762 (AEQD…QIHS), 821–908 (IKLK…YRIE), 937–1055 (SETD…DHDQ), and 1119–1344 (VFEH…LQHS).

The protein belongs to the ANKRD36 family.

The chain is Ankyrin repeat domain-containing protein 36B (ANKRD36B) from Homo sapiens (Human).